The primary structure comprises 272 residues: Phosphonates import ATP-binding protein PhnC 1 (272 aa).

The region spanning 2–246 is the ABC transporter domain; sequence LRIQALTKTY…VLTSIYGEED (245 aa). Residue 35 to 42 coordinates ATP; sequence GPSGAGKS.

This sequence belongs to the ABC transporter superfamily. Phosphonates importer (TC 3.A.1.9.1) family. In terms of assembly, the complex is composed of two ATP-binding proteins (PhnC), two transmembrane proteins (PhnE) and a solute-binding protein (PhnD).

It localises to the cell inner membrane. It carries out the reaction phosphonate(out) + ATP + H2O = phosphonate(in) + ADP + phosphate + H(+). Its function is as follows. Part of the ABC transporter complex PhnCDE involved in phosphonates import. Responsible for energy coupling to the transport system. The sequence is that of Phosphonates import ATP-binding protein PhnC 1 from Rhodopseudomonas palustris (strain BisB18).